The sequence spans 73 residues: uncharacterized protein (73 aa).

A helical transmembrane segment spans residues 54-72; sequence VSFIVAPTVMQVQCLFFFI.

It localises to the membrane. This is an uncharacterized protein from Saccharomyces cerevisiae (strain ATCC 204508 / S288c) (Baker's yeast).